Consider the following 77-residue polypeptide: Large ribosomal subunit protein uL29 (77 aa).

Belongs to the universal ribosomal protein uL29 family.

The chain is Large ribosomal subunit protein uL29 from Mycolicibacterium gilvum (strain PYR-GCK) (Mycobacterium gilvum (strain PYR-GCK)).